An 80-amino-acid chain; its full sequence is MQMKATILIVLVALFMIQQSEAGWFGKAFRSVSNFYKKHKTYIHAGLSAATLLGDMTDEEFQEFMQDIEQAREEELLSRQ.

Positions 1-22 are cleaved as a signal peptide; it reads MQMKATILIVLVALFMIQQSEA. Tryptophan 24 carries the post-translational modification 6'-bromotryptophan. At leucine 53 the chain carries Leucine amide. A propeptide spans 55 to 80 (removed in mature form); the sequence is DMTDEEFQEFMQDIEQAREEELLSRQ.

It localises to the secreted. Functionally, bactericidal against several Gram-positive and Gram-negative bacteria. The chain is Styelin-C from Styela clava (Sea squirt).